The primary structure comprises 571 residues: Proline--tRNA ligase (571 aa).

The protein belongs to the class-II aminoacyl-tRNA synthetase family. ProS type 1 subfamily. Homodimer.

The protein localises to the cytoplasm. It carries out the reaction tRNA(Pro) + L-proline + ATP = L-prolyl-tRNA(Pro) + AMP + diphosphate. Catalyzes the attachment of proline to tRNA(Pro) in a two-step reaction: proline is first activated by ATP to form Pro-AMP and then transferred to the acceptor end of tRNA(Pro). As ProRS can inadvertently accommodate and process non-cognate amino acids such as alanine and cysteine, to avoid such errors it has two additional distinct editing activities against alanine. One activity is designated as 'pretransfer' editing and involves the tRNA(Pro)-independent hydrolysis of activated Ala-AMP. The other activity is designated 'posttransfer' editing and involves deacylation of mischarged Ala-tRNA(Pro). The misacylated Cys-tRNA(Pro) is not edited by ProRS. This is Proline--tRNA ligase from Leuconostoc citreum (strain KM20).